The sequence spans 703 residues: Arylphorin subunit beta (703 aa).

Residues 1–16 form the signal peptide; the sequence is MKTVIILAGLVALALG. N-linked (GlcNAc...) asparagine glycosylation is found at Asn-72 and Asn-211.

It belongs to the hemocyanin family. Arylphorin is a hexamer of subunits alpha and beta. In terms of tissue distribution, fat body.

It localises to the secreted. It is found in the extracellular space. Functionally, arylphorin is a larval storage protein (LSP) which may serve as a storage protein used primarily as a source of aromatic amino acids for protein synthesis during metamorphosis. It is a constituent of the sclerotizing system of the cuticle, and serves as a carrier for ecdysteroid hormone. This Manduca sexta (Tobacco hawkmoth) protein is Arylphorin subunit beta.